The chain runs to 494 residues: NADPH:adrenodoxin oxidoreductase, mitochondrial (494 aa).

The transit peptide at Met-1–Phe-34 directs the protein to the mitochondrion. Positions 51, 72, 80, and 116 each coordinate FAD. Residues Gln-187–Val-190, Arg-231–Arg-232, and Glu-243 contribute to the NADP(+) site. A Phosphoserine modification is found at Ser-313. FAD contacts are provided by residues Trp-401 and Gly-408–Ile-410. Residue Gly-408 participates in NADP(+) binding.

Belongs to the ferredoxin--NADP reductase type 1 family. In terms of assembly, monomer. Interacts directly with FDX1. FAD is required as a cofactor.

Its subcellular location is the mitochondrion inner membrane. It carries out the reaction 2 reduced [adrenodoxin] + NADP(+) + H(+) = 2 oxidized [adrenodoxin] + NADPH. The catalysed reaction is 2 reduced [2Fe-2S]-[ferredoxin] + NADP(+) + H(+) = 2 oxidized [2Fe-2S]-[ferredoxin] + NADPH. It participates in steroid metabolism; cholesterol metabolism. Its function is as follows. Serves as the first electron transfer protein in all the mitochondrial P450 systems including cholesterol side chain cleavage in all steroidogenic tissues, steroid 11-beta hydroxylation in the adrenal cortex, 25-OH-vitamin D3-24 hydroxylation in the kidney, and sterol C-27 hydroxylation in the liver. Also acts as a ferredoxin--NADP(+) reductase essential for coenzyme Q biosynthesis: together with FDX2, transfers the electrons required for the hydroxylation reaction performed by COQ6. In Rattus norvegicus (Rat), this protein is NADPH:adrenodoxin oxidoreductase, mitochondrial (Fdxr).